The sequence spans 376 residues: Queuine tRNA-ribosyltransferase (376 aa).

Asp-92 acts as the Proton acceptor in catalysis. Substrate is bound by residues 92 to 96 (DSGGF), Asp-146, Gln-190, and Gly-217. Positions 248-254 (GVGRPED) are RNA binding. Residue Asp-267 is the Nucleophile of the active site. The segment at 272 to 276 (TRNAR) is RNA binding; important for wobble base 34 recognition. Cys-305, Cys-307, Cys-310, and His-337 together coordinate Zn(2+).

Belongs to the queuine tRNA-ribosyltransferase family. As to quaternary structure, homodimer. Within each dimer, one monomer is responsible for RNA recognition and catalysis, while the other monomer binds to the replacement base PreQ1. Zn(2+) is required as a cofactor.

The enzyme catalyses 7-aminomethyl-7-carbaguanine + guanosine(34) in tRNA = 7-aminomethyl-7-carbaguanosine(34) in tRNA + guanine. It participates in tRNA modification; tRNA-queuosine biosynthesis. Catalyzes the base-exchange of a guanine (G) residue with the queuine precursor 7-aminomethyl-7-deazaguanine (PreQ1) at position 34 (anticodon wobble position) in tRNAs with GU(N) anticodons (tRNA-Asp, -Asn, -His and -Tyr). Catalysis occurs through a double-displacement mechanism. The nucleophile active site attacks the C1' of nucleotide 34 to detach the guanine base from the RNA, forming a covalent enzyme-RNA intermediate. The proton acceptor active site deprotonates the incoming PreQ1, allowing a nucleophilic attack on the C1' of the ribose to form the product. After dissociation, two additional enzymatic reactions on the tRNA convert PreQ1 to queuine (Q), resulting in the hypermodified nucleoside queuosine (7-(((4,5-cis-dihydroxy-2-cyclopenten-1-yl)amino)methyl)-7-deazaguanosine). In Stenotrophomonas maltophilia (strain R551-3), this protein is Queuine tRNA-ribosyltransferase.